The following is a 372-amino-acid chain: N-methyl-L-tryptophan oxidase (372 aa).

FAD is bound at residue Asp4–His34. Cys308 carries the S-8alpha-FAD cysteine modification.

The protein belongs to the MSOX/MTOX family. MTOX subfamily. In terms of assembly, monomer. It depends on FAD as a cofactor.

The catalysed reaction is N(alpha)-methyl-L-tryptophan + O2 + H2O = L-tryptophan + formaldehyde + H2O2. Catalyzes the oxidative demethylation of N-methyl-L-tryptophan. This Shigella sonnei (strain Ss046) protein is N-methyl-L-tryptophan oxidase.